Reading from the N-terminus, the 147-residue chain is Hemoglobin subunit beta (147 aa).

Val-2 is subject to N-acetylvaline. Residues 3 to 147 (HLTGEEKSAV…VANALAHKYH (145 aa)) enclose the Globin domain. Residue Thr-13 is modified to Phosphothreonine. At Ser-45 the chain carries Phosphoserine. Position 60 is an N6-acetyllysine (Lys-60). Residue His-64 coordinates heme b. Lys-83 is modified (N6-acetyllysine). Position 93 (His-93) interacts with heme b. Cys-94 carries the post-translational modification S-nitrosocysteine. An N6-acetyllysine modification is found at Lys-145.

It belongs to the globin family. Heterotetramer of two alpha chains and two beta chains. As to expression, red blood cells.

Involved in oxygen transport from the lung to the various peripheral tissues. In Callithrix jacchus (White-tufted-ear marmoset), this protein is Hemoglobin subunit beta (HBB).